The following is a 235-amino-acid chain: Ubiquinone/menaquinone biosynthesis C-methyltransferase UbiE (235 aa).

S-adenosyl-L-methionine contacts are provided by threonine 59, aspartate 84, and serine 123.

Belongs to the class I-like SAM-binding methyltransferase superfamily. MenG/UbiE family.

The catalysed reaction is a 2-demethylmenaquinol + S-adenosyl-L-methionine = a menaquinol + S-adenosyl-L-homocysteine + H(+). The enzyme catalyses a 2-methoxy-6-(all-trans-polyprenyl)benzene-1,4-diol + S-adenosyl-L-methionine = a 5-methoxy-2-methyl-3-(all-trans-polyprenyl)benzene-1,4-diol + S-adenosyl-L-homocysteine + H(+). It participates in quinol/quinone metabolism; menaquinone biosynthesis; menaquinol from 1,4-dihydroxy-2-naphthoate: step 2/2. The protein operates within cofactor biosynthesis; ubiquinone biosynthesis. In terms of biological role, methyltransferase required for the conversion of demethylmenaquinol (DMKH2) to menaquinol (MKH2) and the conversion of 2-polyprenyl-6-methoxy-1,4-benzoquinol (DDMQH2) to 2-polyprenyl-3-methyl-6-methoxy-1,4-benzoquinol (DMQH2). The polypeptide is Ubiquinone/menaquinone biosynthesis C-methyltransferase UbiE (Campylobacter jejuni subsp. jejuni serotype O:23/36 (strain 81-176)).